Here is a 463-residue protein sequence, read N- to C-terminus: Trigger factor (463 aa).

The 82-residue stretch at 162–243 (GDHVSIDLSA…VHSVKLKELP (82 aa)) folds into the PPIase FKBP-type domain. Residues 427-444 (SGNTIEPPTPVHTETITV) show a composition bias toward polar residues. The disordered stretch occupies residues 427 to 463 (SGNTIEPPTPVHTETITVASGDEETEESAAEQGETEK).

The protein belongs to the FKBP-type PPIase family. Tig subfamily.

Its subcellular location is the cytoplasm. It carries out the reaction [protein]-peptidylproline (omega=180) = [protein]-peptidylproline (omega=0). Its function is as follows. Involved in protein export. Acts as a chaperone by maintaining the newly synthesized protein in an open conformation. Functions as a peptidyl-prolyl cis-trans isomerase. This is Trigger factor from Thermobifida fusca (strain YX).